The chain runs to 529 residues: CTP synthase (529 aa).

The interval 1-267 (MKEAKFIFVT…DTQILEHFHL (267 aa)) is amidoligase domain. Serine 15 contacts CTP. Serine 15 serves as a coordination point for UTP. Residues 16–21 (SLGKGL) and aspartate 73 contribute to the ATP site. Mg(2+) is bound by residues aspartate 73 and glutamate 141. CTP is bound by residues 148–150 (DIE), 188–193 (KTKPTQ), and lysine 224. UTP is bound by residues 188–193 (KTKPTQ) and lysine 224. The region spanning 292–529 (TVSIVGKYTE…SFVKAAIDKK (238 aa)) is the Glutamine amidotransferase type-1 domain. Position 354 (glycine 354) interacts with L-glutamine. Cysteine 381 (nucleophile; for glutamine hydrolysis) is an active-site residue. Residues 382 to 385 (LGMQ), glutamate 405, and arginine 459 each bind L-glutamine. Residues histidine 504 and glutamate 506 contribute to the active site.

The protein belongs to the CTP synthase family. Homotetramer.

The catalysed reaction is UTP + L-glutamine + ATP + H2O = CTP + L-glutamate + ADP + phosphate + 2 H(+). It catalyses the reaction L-glutamine + H2O = L-glutamate + NH4(+). It carries out the reaction UTP + NH4(+) + ATP = CTP + ADP + phosphate + 2 H(+). The protein operates within pyrimidine metabolism; CTP biosynthesis via de novo pathway; CTP from UDP: step 2/2. With respect to regulation, allosterically activated by GTP, when glutamine is the substrate; GTP has no effect on the reaction when ammonia is the substrate. The allosteric effector GTP functions by stabilizing the protein conformation that binds the tetrahedral intermediate(s) formed during glutamine hydrolysis. Inhibited by the product CTP, via allosteric rather than competitive inhibition. In terms of biological role, catalyzes the ATP-dependent amination of UTP to CTP with either L-glutamine or ammonia as the source of nitrogen. Regulates intracellular CTP levels through interactions with the four ribonucleotide triphosphates. The sequence is that of CTP synthase from Wolbachia pipientis wMel.